Here is a 563-residue protein sequence, read N- to C-terminus: Adenine deaminase (563 aa).

It belongs to the metallo-dependent hydrolases superfamily. Adenine deaminase family. Mn(2+) serves as cofactor.

The enzyme catalyses adenine + H2O + H(+) = hypoxanthine + NH4(+). The sequence is that of Adenine deaminase from Brucella anthropi (strain ATCC 49188 / DSM 6882 / CCUG 24695 / JCM 21032 / LMG 3331 / NBRC 15819 / NCTC 12168 / Alc 37) (Ochrobactrum anthropi).